The following is a 238-amino-acid chain: Urease subunit alpha (238 aa).

Positions 1–102 (MKLTPKELDK…LVTVHTPIEA (102 aa)) are urease gamma. Residues 103 to 238 (NGKLVPGELF…DDNYVKTIKE (136 aa)) are urease beta.

It in the N-terminal section; belongs to the urease gamma subunit family. In the C-terminal section; belongs to the urease beta subunit family. As to quaternary structure, heterohexamer of 3 UreA (alpha) and 3 UreB (beta) subunits. Four heterohexamers assemble to form a 16 nm dodecameric complex.

It carries out the reaction urea + 2 H2O + H(+) = hydrogencarbonate + 2 NH4(+). The protein operates within nitrogen metabolism; urea degradation; CO(2) and NH(3) from urea (urease route): step 1/1. The sequence is that of Urease subunit alpha from Helicobacter pylori (strain J99 / ATCC 700824) (Campylobacter pylori J99).